We begin with the raw amino-acid sequence, 63 residues long: Large ribosomal subunit protein bL35 (63 aa).

Positions 1-43 (MKMRTHSGAKKRLKVLSSGKVKKKSTRMRHLNSHMSSKTKRQL) are enriched in basic residues. The disordered stretch occupies residues 1 to 45 (MKMRTHSGAKKRLKVLSSGKVKKKSTRMRHLNSHMSSKTKRQLGK).

Belongs to the bacterial ribosomal protein bL35 family.

The sequence is that of Large ribosomal subunit protein bL35 from Bdellovibrio bacteriovorus (strain ATCC 15356 / DSM 50701 / NCIMB 9529 / HD100).